The chain runs to 170 residues: 6,7-dimethyl-8-ribityllumazine synthase 2 (170 aa).

5-amino-6-(D-ribitylamino)uracil-binding positions include W25, 59–61, and 83–85; these read AFE and LVV. R91 (proton donor) is an active-site residue. S116 serves as a coordination point for 5-amino-6-(D-ribitylamino)uracil. (2S)-2-hydroxy-3-oxobutyl phosphate is bound at residue H130.

This sequence belongs to the DMRL synthase family. In terms of assembly, forms an icosahedral capsid composed of 60 subunits, arranged as a dodecamer of pentamers.

The catalysed reaction is (2S)-2-hydroxy-3-oxobutyl phosphate + 5-amino-6-(D-ribitylamino)uracil = 6,7-dimethyl-8-(1-D-ribityl)lumazine + phosphate + 2 H2O + H(+). The protein operates within cofactor biosynthesis; riboflavin biosynthesis; riboflavin from 2-hydroxy-3-oxobutyl phosphate and 5-amino-6-(D-ribitylamino)uracil: step 1/2. Functionally, catalyzes the formation of 6,7-dimethyl-8-ribityllumazine by condensation of 5-amino-6-(D-ribitylamino)uracil with 3,4-dihydroxy-2-butanone 4-phosphate. This is the penultimate step in the biosynthesis of riboflavin. This Pseudomonas syringae pv. tomato (strain ATCC BAA-871 / DC3000) protein is 6,7-dimethyl-8-ribityllumazine synthase 2.